The sequence spans 142 residues: Ovocleidin-17 (142 aa).

3 disulfides stabilise this stretch: Cys-5–Cys-16, Cys-33–Cys-138, and Cys-113–Cys-130. One can recognise a C-type lectin domain in the interval Thr-12–Lys-139. An N-linked (GlcNAc...) asparagine glycan is attached at Asn-59. Phosphoserine occurs at positions 61 and 67.

As to expression, expressed in the shell gland mucosa. Not detected in hen liver, magnum, isthmus, cartilage, bone or in egg white or yolk.

The protein localises to the secreted. The protein resides in the extracellular space. Its subcellular location is the extracellular matrix. In terms of biological role, may form proteinaceous networks during the construction of the eggshell which then may control the deposition of the mineral phase. This chain is Ovocleidin-17, found in Gallus gallus (Chicken).